Reading from the N-terminus, the 108-residue chain is Large ribosomal subunit protein uL11 (108 aa).

It belongs to the universal ribosomal protein uL11 family. As to quaternary structure, part of the ribosomal stalk of the 50S ribosomal subunit. Interacts with L10 and the large rRNA to form the base of the stalk. L10 forms an elongated spine to which L12 dimers bind in a sequential fashion forming a multimeric L10(L12)X complex.

Functionally, forms part of the ribosomal stalk which helps the ribosome interact with GTP-bound translation factors. The sequence is that of Large ribosomal subunit protein uL11 (rpl11) from Aeropyrum pernix (strain ATCC 700893 / DSM 11879 / JCM 9820 / NBRC 100138 / K1).